The chain runs to 96 residues: ATP synthase subunit c (96 aa).

A run of 2 helical transmembrane segments spans residues 28–50 (LGAG…NIGA) and 75–95 (AVTE…LFVL).

Belongs to the ATPase C chain family. In terms of assembly, F-type ATPases have 2 components, F(1) - the catalytic core - and F(0) - the membrane proton channel. F(1) has five subunits: alpha(3), beta(3), gamma(1), delta(1), epsilon(1). F(0) has three main subunits: a(1), b(2) and c(10-14). The alpha and beta chains form an alternating ring which encloses part of the gamma chain. F(1) is attached to F(0) by a central stalk formed by the gamma and epsilon chains, while a peripheral stalk is formed by the delta and b chains.

Its subcellular location is the cell inner membrane. In terms of biological role, f(1)F(0) ATP synthase produces ATP from ADP in the presence of a proton or sodium gradient. F-type ATPases consist of two structural domains, F(1) containing the extramembraneous catalytic core and F(0) containing the membrane proton channel, linked together by a central stalk and a peripheral stalk. During catalysis, ATP synthesis in the catalytic domain of F(1) is coupled via a rotary mechanism of the central stalk subunits to proton translocation. Functionally, key component of the F(0) channel; it plays a direct role in translocation across the membrane. A homomeric c-ring of between 10-14 subunits forms the central stalk rotor element with the F(1) delta and epsilon subunits. The chain is ATP synthase subunit c from Petrotoga mobilis (strain DSM 10674 / SJ95).